A 1992-amino-acid chain; its full sequence is Otoferlin (1992 aa).

3 C2 domains span residues 1–98 (MALV…EVSD), 241–362 (KRSK…HKWA), and 405–536 (IEGN…FLPT). Residues 1–1958 (MALVVHLKTV…IRYFIWHNYR (1958 aa)) lie on the Cytoplasmic side of the membrane. The interval 655 to 699 (PALAKKKKEGGGESEEEESELIHNSSEEEAEDDGDLTSVPSTPPM) is disordered. C2 domains lie at 952–1077 (IQAV…PPRF) and 1124–1250 (RGPI…NNWA). 4 residues coordinate Ca(2+): aspartate 984, aspartate 990, aspartate 1046, and aspartate 1048. Residues 1282 to 1363 (VKVDLNEDEK…ESAEIKADDF (82 aa)) adopt a coiled-coil conformation. Disordered regions lie at residues 1288–1311 (EDEKEKEKKKKKKKKGEEVEEEEP) and 1354–1399 (ESAE…KPKV). Residues 1356–1399 (AEIKADDFPMKGTKPKEKSKDKKSTKDKKKNNDGTEKRPPKPKV) are compositionally biased toward basic and acidic residues. 2 consecutive C2 domains span residues 1470-1588 (DPNM…ATCG) and 1711-1860 (PAPG…KQCS). The Ca(2+) site is built by aspartate 1503, aspartate 1509, aspartate 1558, aspartate 1560, aspartate 1566, aspartate 1831, serine 1834, and aspartate 1837. A helical transmembrane segment spans residues 1959 to 1979 (WLILKALALLLLLLLVGLFLY). At 1980–1992 (SIPGYLVKKLLGA) the chain is on the extracellular side.

This sequence belongs to the ferlin family. Ca(2+) serves as cofactor.

The protein localises to the cytoplasmic vesicle. Its subcellular location is the secretory vesicle. The protein resides in the synaptic vesicle membrane. It localises to the basolateral cell membrane. It is found in the endoplasmic reticulum membrane. The protein localises to the golgi apparatus membrane. Its subcellular location is the presynaptic cell membrane. The protein resides in the cell membrane. Key calcium ion sensor involved in the Ca(2+)-triggered synaptic vesicle-plasma membrane fusion and in the control of neurotransmitter release at these output synapses. The protein is Otoferlin (otof) of Danio rerio (Zebrafish).